Consider the following 431-residue polypeptide: U-box domain-containing protein 20 (431 aa).

Residues 32 to 106 (TIPSQFQCPI…QGWCGSSLGG (75 aa)) form the U-box domain.

It catalyses the reaction S-ubiquitinyl-[E2 ubiquitin-conjugating enzyme]-L-cysteine + [acceptor protein]-L-lysine = [E2 ubiquitin-conjugating enzyme]-L-cysteine + N(6)-ubiquitinyl-[acceptor protein]-L-lysine.. The protein operates within protein modification; protein ubiquitination. In terms of biological role, functions as an E3 ubiquitin ligase. In Arabidopsis thaliana (Mouse-ear cress), this protein is U-box domain-containing protein 20 (PUB20).